We begin with the raw amino-acid sequence, 645 residues long: Chlorophyllide a oxygenase, chloroplastic (645 aa).

The tract at residues 1–46 is disordered; it reads MLPASLQRKAAAVGGRGPTNQSRVAVRVSAQPKEAPPASTPIVEDP. Residues 105 to 218 are a coiled coil; it reads QARQKLEYLR…RKASDLDIKE (114 aa). Residues 258–287 are disordered; it reads ATTVTQEVPSTSYGTPVDRAPRRSKAAIRR. A compositionally biased stretch (polar residues) spans 259–271; that stretch reads TTVTQEVPSTSYG. The region spanning 305-406 is the Rieske domain; the sequence is WYPAEFSARL…CAEKDGFIWV (102 aa). 4 residues coordinate [2Fe-2S] cluster: cysteine 346, histidine 348, cysteine 365, and histidine 368. Fe cation is bound by residues glutamate 446, aspartate 450, histidine 453, and histidine 458.

The protein resides in the plastid. Its subcellular location is the chloroplast inner membrane. It is found in the chloroplast thylakoid membrane. It catalyses the reaction chlorophyllide a + 2 NADPH + 2 O2 + 2 H(+) = chlorophyllide b + 2 NADP(+) + 3 H2O. Functionally, catalyzes a two-step oxygenase reaction involved in the synthesis of chlorophyll b. Acts specifically on the non-esterified chlorophyllide a and not on chlorophyll a. The protein is Chlorophyllide a oxygenase, chloroplastic (CAO) of Chlamydomonas reinhardtii (Chlamydomonas smithii).